A 151-amino-acid chain; its full sequence is MQKKLQVEAIEHGSVIDHIPVQQGVKIIRFFNLTQTNEKITIGLNLATHTGQKKDLIKVENTFISDKQANQLALFAPHATINQIKDFKVVNKFQVQLPDSFIDVLACPNSNCISHHEPVDTRFYVKKKSTLKLKCHYCEKTFDHLFFSELD.

Residues cysteine 107, cysteine 112, cysteine 135, and cysteine 138 each contribute to the Zn(2+) site.

It belongs to the PyrI family. In terms of assembly, contains catalytic and regulatory chains. The cofactor is Zn(2+).

In terms of biological role, involved in allosteric regulation of aspartate carbamoyltransferase. In Psychromonas ingrahamii (strain DSM 17664 / CCUG 51855 / 37), this protein is Aspartate carbamoyltransferase regulatory chain.